The following is a 99-amino-acid chain: CTP synthase (99 aa).

One can recognise a Glutamine amidotransferase type-1 domain in the interval Thr1 to Lys99. Position 28 (Arg28) interacts with L-glutamine. Residues His73 and Glu75 contribute to the active site.

It belongs to the CTP synthase family. As to quaternary structure, homotetramer.

The enzyme catalyses UTP + L-glutamine + ATP + H2O = CTP + L-glutamate + ADP + phosphate + 2 H(+). It catalyses the reaction L-glutamine + H2O = L-glutamate + NH4(+). The catalysed reaction is UTP + NH4(+) + ATP = CTP + ADP + phosphate + 2 H(+). It functions in the pathway pyrimidine metabolism; CTP biosynthesis via de novo pathway; CTP from UDP: step 2/2. Its activity is regulated as follows. Allosterically activated by GTP, when glutamine is the substrate; GTP has no effect on the reaction when ammonia is the substrate. The allosteric effector GTP functions by stabilizing the protein conformation that binds the tetrahedral intermediate(s) formed during glutamine hydrolysis. Inhibited by the product CTP, via allosteric rather than competitive inhibition. Functionally, catalyzes the ATP-dependent amination of UTP to CTP with either L-glutamine or ammonia as the source of nitrogen. Regulates intracellular CTP levels through interactions with the four ribonucleotide triphosphates. The sequence is that of CTP synthase from Mycoplasma capricolum subsp. capripneumoniae.